The chain runs to 96 residues: MNKKAIVGIFMSILMAGLVGCAGSSDAQAGDDLKPVIYLYPQEDNTEISVSLDYNGNLVDLIPEFNADKTWNVTANKDGKITFEGQTYDYLFWEGD.

The N-terminal stretch at 1–28 (MNKKAIVGIFMSILMAGLVGCAGSSDAQ) is a signal peptide.

This is an uncharacterized protein from Butyrivibrio fibrisolvens.